Consider the following 246-residue polypeptide: Probable transcriptional regulatory protein BVU_3469 (246 aa).

This sequence belongs to the TACO1 family.

Its subcellular location is the cytoplasm. This chain is Probable transcriptional regulatory protein BVU_3469, found in Phocaeicola vulgatus (strain ATCC 8482 / DSM 1447 / JCM 5826 / CCUG 4940 / NBRC 14291 / NCTC 11154) (Bacteroides vulgatus).